A 500-amino-acid polypeptide reads, in one-letter code: ATP synthase subunit alpha (500 aa).

An ATP-binding site is contributed by 167–174 (GDRQTGKT).

The protein belongs to the ATPase alpha/beta chains family. F-type ATPases have 2 components, CF(1) - the catalytic core - and CF(0) - the membrane proton channel. CF(1) has five subunits: alpha(3), beta(3), gamma(1), delta(1), epsilon(1). CF(0) has three main subunits: a(1), b(2) and c(9-12). The alpha and beta chains form an alternating ring which encloses part of the gamma chain. CF(1) is attached to CF(0) by a central stalk formed by the gamma and epsilon chains, while a peripheral stalk is formed by the delta and b chains.

Its subcellular location is the cell inner membrane. The catalysed reaction is ATP + H2O + 4 H(+)(in) = ADP + phosphate + 5 H(+)(out). In terms of biological role, produces ATP from ADP in the presence of a proton gradient across the membrane. The alpha chain is a regulatory subunit. The polypeptide is ATP synthase subunit alpha (Wolinella succinogenes (strain ATCC 29543 / DSM 1740 / CCUG 13145 / JCM 31913 / LMG 7466 / NCTC 11488 / FDC 602W) (Vibrio succinogenes)).